The sequence spans 293 residues: Protein orai (293 aa).

Residues 1-122 (MPRSHDPSRV…RAQLKASSRT (122 aa)) lie on the Cytoplasmic side of the membrane. The tract at residues 62–81 (STAGGGSRNGVGSKEGSVTS) is disordered. Residues 123 to 141 (SALLAGFAMVCLVELQYDQ) form a helical membrane-spanning segment. The Extracellular portion of the chain corresponds to 142–146 (STPKP). A helical membrane pass occupies residues 147–167 (LLIVLGVVTSLLVSVHLLALM). Topologically, residues 168–198 (MSTCILPYMEATGCTQDSPHIKLKFYIDLSW) are cytoplasmic. A helical membrane pass occupies residues 199 to 219 (LFSTCIGLLLFLVEIGVIFYV). Residues 220–230 (KFTAVGYPTAG) lie on the Extracellular side of the membrane. The helical transmembrane segment at 231-251 (YITTAMLVPVGVVFVVFSYLI) threads the bilayer. Residues 252–293 (HKNRVSHSLGRFKHKVDTMKQFLDVEANLQKSTLAPSTIRDI) lie on the Cytoplasmic side of the membrane.

It belongs to the Orai family. In terms of tissue distribution, expressed in gonad sheath cells, hypodermis, intestine and spermatheca. Coexpressed with stim-1.

It is found in the membrane. In terms of biological role, ca(2+) release-activated Ca(2+)-like (CRAC-like) channel subunit which mediates Ca(2+) influx and increase in Ca(2+)-selective current by synergy with the Ca(2+) sensor, stim-1. Required for Ca(2+) and IP3-dependent contractile activity of sheath cells and the spermatheca. Affects brood size and somatic cell function. The protein is Protein orai (orai-1) of Caenorhabditis elegans.